The sequence spans 587 residues: Arginine--tRNA ligase (587 aa).

The 'HIGH' region signature appears at 127–137 (PNLAKEMHVGH).

It belongs to the class-I aminoacyl-tRNA synthetase family. Monomer.

The protein resides in the cytoplasm. It catalyses the reaction tRNA(Arg) + L-arginine + ATP = L-arginyl-tRNA(Arg) + AMP + diphosphate. This Pseudomonas paraeruginosa (strain DSM 24068 / PA7) (Pseudomonas aeruginosa (strain PA7)) protein is Arginine--tRNA ligase.